A 165-amino-acid chain; its full sequence is RxLR effector protein CRE12 (165 aa).

The first 23 residues, 1 to 23 (MRLAAFVLVAVAFAIIPDGRVSA), serve as a signal peptide directing secretion. The short motif at 40–59 (RLLRLNAVPQPVETGNQEER) is the RxLR-dEER element.

The protein belongs to the RxLR effector family.

It localises to the secreted. It is found in the host cell. In terms of biological role, effector that is involved in host plant infection. Contributes to virulence during the early infection stage, by inhibiting plant defense responses induced by both PAMP-triggered immunity (PTI) and effector-triggered immunity (ETI). The sequence is that of RxLR effector protein CRE12 from Phytophthora infestans (strain T30-4) (Potato late blight agent).